The sequence spans 385 residues: Queuine tRNA-ribosyltransferase (385 aa).

Catalysis depends on Asp-93, which acts as the Proton acceptor. Substrate contacts are provided by residues Asp-93–Phe-97, Asp-147, Gln-191, and Gly-218. Positions Gly-249–Asp-255 are RNA binding. The active-site Nucleophile is the Asp-268. The RNA binding; important for wobble base 34 recognition stretch occupies residues Thr-273–Arg-277. The Zn(2+) site is built by Cys-306, Cys-308, Cys-311, and His-337.

The protein belongs to the queuine tRNA-ribosyltransferase family. As to quaternary structure, homodimer. Within each dimer, one monomer is responsible for RNA recognition and catalysis, while the other monomer binds to the replacement base PreQ1. Zn(2+) serves as cofactor.

The enzyme catalyses 7-aminomethyl-7-carbaguanine + guanosine(34) in tRNA = 7-aminomethyl-7-carbaguanosine(34) in tRNA + guanine. Its pathway is tRNA modification; tRNA-queuosine biosynthesis. Functionally, catalyzes the base-exchange of a guanine (G) residue with the queuine precursor 7-aminomethyl-7-deazaguanine (PreQ1) at position 34 (anticodon wobble position) in tRNAs with GU(N) anticodons (tRNA-Asp, -Asn, -His and -Tyr). Catalysis occurs through a double-displacement mechanism. The nucleophile active site attacks the C1' of nucleotide 34 to detach the guanine base from the RNA, forming a covalent enzyme-RNA intermediate. The proton acceptor active site deprotonates the incoming PreQ1, allowing a nucleophilic attack on the C1' of the ribose to form the product. After dissociation, two additional enzymatic reactions on the tRNA convert PreQ1 to queuine (Q), resulting in the hypermodified nucleoside queuosine (7-(((4,5-cis-dihydroxy-2-cyclopenten-1-yl)amino)methyl)-7-deazaguanosine). The polypeptide is Queuine tRNA-ribosyltransferase (Pasteurella multocida (strain Pm70)).